The chain runs to 289 residues: Serine/threonine-protein phosphatase Pgam5, mitochondrial (289 aa).

Belongs to the phosphoglycerate mutase family. BPG-dependent PGAM subfamily. As to quaternary structure, interacts with Pk92B/ASK1.

It localises to the mitochondrion outer membrane. It carries out the reaction O-phospho-L-seryl-[protein] + H2O = L-seryl-[protein] + phosphate. It catalyses the reaction O-phospho-L-threonyl-[protein] + H2O = L-threonyl-[protein] + phosphate. In terms of biological role, displays phosphatase activity for serine/threonine residues, and dephosphorylates and activates Pk92B kinase. Has apparently no phosphoglycerate mutase activity. In Drosophila mojavensis (Fruit fly), this protein is Serine/threonine-protein phosphatase Pgam5, mitochondrial.